The chain runs to 957 residues: Vacuolar membrane protease (957 aa).

The Cytoplasmic portion of the chain corresponds to 1–10 (MARYNPFSFT). Residues 11-31 (PGPVVFFTTVIYVGLFAALLV) traverse the membrane as a helical segment. The Vacuolar segment spans residues 32–369 (THLTVPDYPS…RVFVVFQLHT (338 aa)). N-linked (GlcNAc...) asparagine glycosylation is found at asparagine 48, asparagine 105, and asparagine 136. The Zn(2+) site is built by histidine 152 and aspartate 164. The active-site Proton acceptor is the glutamate 198. The Zn(2+) site is built by glutamate 199, glutamate 224, and histidine 297. Residues 370–390 (LFALCVTLLVVAPIALIGLTF) traverse the membrane as a helical segment. Topologically, residues 391-423 (GLSKADKNYLLARKAFVYSSDDDNPVQLYGWRG) are cytoplasmic. Residues 424 to 444 (FFRFPIVFVSATAVVVALAYL) form a helical membrane-spanning segment. Over 445 to 450 (LVRFNA) the chain is Vacuolar. The chain crosses the membrane as a helical span at residues 451–471 (FIIYSSPFAVWSMMLSAWFFV). Topologically, residues 472–490 (AWFFSRGADAMRPSALQRM) are cytoplasmic. A helical membrane pass occupies residues 491–511 (YALIWLFIGSFVLLTIITVFV). Over 512–521 (NNYQVVAGYP) the chain is Vacuolar. The chain crosses the membrane as a helical span at residues 522-542 (ALFYFAVVFAALMLSYLELFF). Residues 543–642 (APTKSAYARH…YPGEQEWSGK (100 aa)) lie on the Cytoplasmic side of the membrane. 2 disordered regions span residues 560-591 (RRNS…DATE) and 603-628 (FTRY…RRLD). The segment covering 564 to 577 (ESASRPLTGSTTAA) has biased composition (polar residues). The chain crosses the membrane as a helical span at residues 643–663 (LPSWIWIIQLLLLAPLVIVLV). At 664–685 (GQVALLLTSALYQTPSDGNSPL) the chain is on the vacuolar side. The helical transmembrane segment at 686 to 706 (FIYLAIAALSVLLLAPTGPFI) threads the bilayer. Residues 707–713 (HRFTYHV) are Cytoplasmic-facing. The helical transmembrane segment at 714 to 734 (PTFLFLVCLATVIYNLVAFPF) threads the bilayer. The Vacuolar segment spans residues 735–957 (SRDHRLKVYF…LVEGFKQFEI (223 aa)). N-linked (GlcNAc...) asparagine glycosylation is found at asparagine 782, asparagine 818, and asparagine 834.

This sequence belongs to the peptidase M28 family. Zn(2+) serves as cofactor.

The protein localises to the vacuole membrane. Its function is as follows. May be involved in vacuolar sorting and osmoregulation. This chain is Vacuolar membrane protease, found in Pyrenophora tritici-repentis (strain Pt-1C-BFP) (Wheat tan spot fungus).